We begin with the raw amino-acid sequence, 141 residues long: Nucleoside diphosphate kinase (141 aa).

ATP is bound by residues Lys11, Phe59, Arg87, Thr93, Arg104, and Asn114. His117 (pros-phosphohistidine intermediate) is an active-site residue.

It belongs to the NDK family. In terms of assembly, homotetramer. Mg(2+) is required as a cofactor.

It is found in the cytoplasm. The enzyme catalyses a 2'-deoxyribonucleoside 5'-diphosphate + ATP = a 2'-deoxyribonucleoside 5'-triphosphate + ADP. It carries out the reaction a ribonucleoside 5'-diphosphate + ATP = a ribonucleoside 5'-triphosphate + ADP. Functionally, major role in the synthesis of nucleoside triphosphates other than ATP. The ATP gamma phosphate is transferred to the NDP beta phosphate via a ping-pong mechanism, using a phosphorylated active-site intermediate. The sequence is that of Nucleoside diphosphate kinase from Polaromonas sp. (strain JS666 / ATCC BAA-500).